A 212-amino-acid chain; its full sequence is ATP phosphoribosyltransferase (212 aa).

This sequence belongs to the ATP phosphoribosyltransferase family. Short subfamily. As to quaternary structure, heteromultimer composed of HisG and HisZ subunits.

It localises to the cytoplasm. The enzyme catalyses 1-(5-phospho-beta-D-ribosyl)-ATP + diphosphate = 5-phospho-alpha-D-ribose 1-diphosphate + ATP. Its pathway is amino-acid biosynthesis; L-histidine biosynthesis; L-histidine from 5-phospho-alpha-D-ribose 1-diphosphate: step 1/9. In terms of biological role, catalyzes the condensation of ATP and 5-phosphoribose 1-diphosphate to form N'-(5'-phosphoribosyl)-ATP (PR-ATP). Has a crucial role in the pathway because the rate of histidine biosynthesis seems to be controlled primarily by regulation of HisG enzymatic activity. The chain is ATP phosphoribosyltransferase from Prochlorococcus marinus (strain AS9601).